The primary structure comprises 262 residues: Acyl-[acyl-carrier-protein]--UDP-N-acetylglucosamine O-acyltransferase (262 aa).

Belongs to the transferase hexapeptide repeat family. LpxA subfamily. Homotrimer.

It is found in the cytoplasm. The catalysed reaction is a (3R)-hydroxyacyl-[ACP] + UDP-N-acetyl-alpha-D-glucosamine = a UDP-3-O-[(3R)-3-hydroxyacyl]-N-acetyl-alpha-D-glucosamine + holo-[ACP]. The protein operates within glycolipid biosynthesis; lipid IV(A) biosynthesis; lipid IV(A) from (3R)-3-hydroxytetradecanoyl-[acyl-carrier-protein] and UDP-N-acetyl-alpha-D-glucosamine: step 1/6. In terms of biological role, involved in the biosynthesis of lipid A, a phosphorylated glycolipid that anchors the lipopolysaccharide to the outer membrane of the cell. This Salmonella dublin (strain CT_02021853) protein is Acyl-[acyl-carrier-protein]--UDP-N-acetylglucosamine O-acyltransferase.